Consider the following 1358-residue polypeptide: Probable serine/threonine-protein kinase ifkB (1358 aa).

The Protein kinase domain maps to 1–582; the sequence is MIGKGGFGVV…TKQLLESGLL (582 aa). Residues 2–10 and K25 contribute to the ATP site; that span reads IGKGGFGVV. Residues 125-359 form a disordered region; it reads GANNTAGGGD…SSSRKKPPKE (235 aa). Polar residues predominate over residues 136–148; that stretch reads VSNANSNKSMIVG. Residues 149–196 are compositionally biased toward low complexity; it reads NNNKKLTLSSSNTSSSSSLLSNNKSKILNTSKSTSTNTSTSTSTSNTN. A compositionally biased stretch (basic residues) spans 197–208; the sequence is KNKKISKKKKSK. Positions 258 to 285 are enriched in low complexity; sequence NNNNDSNNNYHSDNESDSFSGSISMSDG. The segment covering 306 to 333 has biased composition (acidic residues); sequence DDNENDDDDEEDDDDEYDEEDDDYETFD. Residues 342–351 are compositionally biased toward low complexity; it reads SNNSKLSTSS. D413 acts as the Proton acceptor in catalysis. Disordered regions lie at residues 445-470 and 1148-1204; these read DDLN…TAQQ and GSGG…QQTS. Over residues 447–466 the composition is skewed to low complexity; that stretch reads LNSSTSNAANNINLSSSTNS. Gly residues predominate over residues 1148–1172; that stretch reads GSGGSGGSGGGSSMSSGGGGGGNSN. The span at 1185–1199 shows a compositional bias: low complexity; sequence SNQSTSSSGNSNNSN.

This sequence belongs to the protein kinase superfamily. Ser/Thr protein kinase family. GCN2 subfamily.

The catalysed reaction is L-seryl-[protein] + ATP = O-phospho-L-seryl-[protein] + ADP + H(+). It catalyses the reaction L-threonyl-[protein] + ATP = O-phospho-L-threonyl-[protein] + ADP + H(+). The chain is Probable serine/threonine-protein kinase ifkB (ifkB) from Dictyostelium discoideum (Social amoeba).